A 577-amino-acid polypeptide reads, in one-letter code: Zona pellucida sperm-binding protein 3 receptor (577 aa).

The N-terminal stretch at 1–32 (MTAWSLHELWKTSHSTLFQVTLATVLMAPVLG) is a signal peptide. Sushi domains are found at residues 33–92 (DCGP…FCAR), 93–154 (KRCK…ECVI), 155–219 (ATCE…ACEK), 220–279 (IVCH…TCEP), 280–346 (NGCI…GCER), and 347–412 (VCCP…SCEA). 12 cysteine pairs are disulfide-bonded: C34-C78, C64-C90, C95-C136, C122-C152, C157-C200, C186-C217, C222-C264, C250-C277, C282-C332, C316-C344, C349-C397, and C382-C410. N-linked (GlcNAc...) asparagine glycans are attached at residues N72 and N81. Residues N144, N195, and N204 are each glycosylated (N-linked (GlcNAc...) asparagine). N-linked (GlcNAc...) asparagine glycosylation is present at N335. N426, N431, N434, N443, N462, N475, and N497 each carry an N-linked (GlcNAc...) asparagine glycan. One can recognise a Sushi 7 domain in the interval 451–509 (AVCPKPEIINGNLSVEKEIYAEMENITIQCDSGYDLVGSSNIICLENRTWYPDIPFCIM). 2 disulfides stabilise this stretch: C453–C494 and C480–C507.

In terms of assembly, homomultimer; disulfide-linked. In terms of processing, glycosylated. In terms of tissue distribution, testis specific.

It localises to the cytoplasmic vesicle. The protein localises to the secretory vesicle. It is found in the acrosome lumen. Its function is as follows. Binds to ZP3 glycoprotein in egg zona pellucida. Probably involved in interactions between sperm acrosome and egg zona pellucida during and immediately following the acrosome reaction. The sequence is that of Zona pellucida sperm-binding protein 3 receptor (Zp3r) from Rattus norvegicus (Rat).